A 185-amino-acid polypeptide reads, in one-letter code: DNA-directed RNA polymerase 21 kDa subunit (185 aa).

This sequence belongs to the poxviridae DNA-directed RNA polymerase 22 kDa subunit family. The DNA-dependent RNA polymerase used for intermediate and late genes expression consists of eight subunits Rpo30/OPG66, Rpo7/OPG90, Rpo22/OPG103, Rpo147/OPG105, Rpo18/OPG119, Rpo19/OPG131, Rpo132/OPG151 and Rpo35/OPG156. The same holoenzyme, with the addition of the transcription-specificity factor OPG109, is used for early gene expression.

The protein localises to the virion. The catalysed reaction is RNA(n) + a ribonucleoside 5'-triphosphate = RNA(n+1) + diphosphate. Part of the DNA-dependent RNA polymerase which catalyzes the transcription of viral DNA into RNA using the four ribonucleoside triphosphates as substrates. Responsible for the transcription of early, intermediate and late genes. DNA-dependent RNA polymerase associates with the early transcription factor (ETF), itself composed of OPG118 and OPG133, thereby allowing the early genes transcription. Late transcription, and probably also intermediate transcription, require newly synthesized RNA polymerase. The sequence is that of DNA-directed RNA polymerase 21 kDa subunit (OPG103) from Oryctolagus cuniculus (Rabbit).